A 430-amino-acid polypeptide reads, in one-letter code: Trigger factor (430 aa).

The region spanning glycine 157 to proline 242 is the PPIase FKBP-type domain.

The protein belongs to the FKBP-type PPIase family. Tig subfamily.

It is found in the cytoplasm. It catalyses the reaction [protein]-peptidylproline (omega=180) = [protein]-peptidylproline (omega=0). Functionally, involved in protein export. Acts as a chaperone by maintaining the newly synthesized protein in an open conformation. Functions as a peptidyl-prolyl cis-trans isomerase. This is Trigger factor from Xanthomonas euvesicatoria pv. vesicatoria (strain 85-10) (Xanthomonas campestris pv. vesicatoria).